We begin with the raw amino-acid sequence, 277 residues long: Phosphoribosylaminoimidazole-succinocarboxamide synthase (277 aa).

Belongs to the SAICAR synthetase family.

The catalysed reaction is 5-amino-1-(5-phospho-D-ribosyl)imidazole-4-carboxylate + L-aspartate + ATP = (2S)-2-[5-amino-1-(5-phospho-beta-D-ribosyl)imidazole-4-carboxamido]succinate + ADP + phosphate + 2 H(+). It functions in the pathway purine metabolism; IMP biosynthesis via de novo pathway; 5-amino-1-(5-phospho-D-ribosyl)imidazole-4-carboxamide from 5-amino-1-(5-phospho-D-ribosyl)imidazole-4-carboxylate: step 1/2. The chain is Phosphoribosylaminoimidazole-succinocarboxamide synthase from Salinispora tropica (strain ATCC BAA-916 / DSM 44818 / JCM 13857 / NBRC 105044 / CNB-440).